The chain runs to 373 residues: Cobalt-precorrin-5B C(1)-methyltransferase (373 aa).

The protein belongs to the CbiD family.

It carries out the reaction Co-precorrin-5B + S-adenosyl-L-methionine = Co-precorrin-6A + S-adenosyl-L-homocysteine. It participates in cofactor biosynthesis; adenosylcobalamin biosynthesis; cob(II)yrinate a,c-diamide from sirohydrochlorin (anaerobic route): step 6/10. Catalyzes the methylation of C-1 in cobalt-precorrin-5B to form cobalt-precorrin-6A. The protein is Cobalt-precorrin-5B C(1)-methyltransferase of Listeria welshimeri serovar 6b (strain ATCC 35897 / DSM 20650 / CCUG 15529 / CIP 8149 / NCTC 11857 / SLCC 5334 / V8).